Consider the following 189-residue polypeptide: Ribosome maturation factor RimP (189 aa).

This sequence belongs to the RimP family.

The protein resides in the cytoplasm. Required for maturation of 30S ribosomal subunits. The sequence is that of Ribosome maturation factor RimP from Mycobacteroides abscessus (strain ATCC 19977 / DSM 44196 / CCUG 20993 / CIP 104536 / JCM 13569 / NCTC 13031 / TMC 1543 / L948) (Mycobacterium abscessus).